The following is a 20-amino-acid chain: Fibrinogen beta chain (20 aa).

Residues 1 to 12 (IIDYYDEGEEDR) show a composition bias toward acidic residues. Residues 1-20 (IIDYYDEGEEDRDVGVVDAR) form a disordered region.

As to quaternary structure, heterohexamer; disulfide linked. Contains 2 sets of 3 non-identical chains (alpha, beta and gamma). The 2 heterotrimers are in head to head conformation with the N-termini in a small central domain. In terms of processing, conversion of fibrinogen to fibrin is triggered by thrombin, which cleaves fibrinopeptides A and B from alpha and beta chains, and thus exposes the N-terminal polymerization sites responsible for the formation of the soft clot.

It localises to the secreted. Functionally, cleaved by the protease thrombin to yield monomers which, together with fibrinogen alpha (FGA) and fibrinogen gamma (FGG), polymerize to form an insoluble fibrin matrix. Fibrin has a major function in hemostasis as one of the primary components of blood clots. In addition, functions during the early stages of wound repair to stabilize the lesion and guide cell migration during re-epithelialization. Was originally thought to be essential for platelet aggregation, based on in vitro studies using anticoagulated blood. However subsequent studies have shown that it is not absolutely required for thrombus formation in vivo. Enhances expression of SELP in activated platelets. Maternal fibrinogen is essential for successful pregnancy. Fibrin deposition is also associated with infection, where it protects against IFNG-mediated hemorrhage. May also facilitate the antibacterial immune response via both innate and T-cell mediated pathways. This Felis catus (Cat) protein is Fibrinogen beta chain (FGB).